The chain runs to 268 residues: Glucosamine-6-phosphate deaminase (268 aa).

Residue aspartate 72 is the Proton acceptor; for enolization step of the active site. Aspartate 141 serves as the catalytic For ring-opening step. Residue histidine 143 is the Proton acceptor; for ring-opening step of the active site. The active-site For ring-opening step is glutamate 148.

Belongs to the glucosamine/galactosamine-6-phosphate isomerase family. NagB subfamily.

The catalysed reaction is alpha-D-glucosamine 6-phosphate + H2O = beta-D-fructose 6-phosphate + NH4(+). Its pathway is amino-sugar metabolism; N-acetylneuraminate degradation; D-fructose 6-phosphate from N-acetylneuraminate: step 5/5. Its activity is regulated as follows. Allosterically activated by N-acetylglucosamine 6-phosphate (GlcNAc6P). Catalyzes the reversible isomerization-deamination of glucosamine 6-phosphate (GlcN6P) to form fructose 6-phosphate (Fru6P) and ammonium ion. The sequence is that of Glucosamine-6-phosphate deaminase from Borrelia garinii subsp. bavariensis (strain ATCC BAA-2496 / DSM 23469 / PBi) (Borreliella bavariensis).